The following is a 288-amino-acid chain: MALPDFSMRQLLEAGCHFGHQTHRWNPKMKDFIFGERSNIHIIDLSQTVPLLHQALVKVRETAAKGGRVLFVGTKRQAQDPLAQAAGRCAQYYMNQRWLGGTLTNWRTISNSIARLRELEGMFENEGGMAGLTKKEQLMLTREREKLDRSLGGIKDMGGTPDLMFVIDTNKEGIAIQEAKKLGIPVIAVVDTNCDPDLVDFPIPGNDDASRAISLYCDLIADAVLDGMGDSQLAMGMDLGEAEAPVETLVEAEAEVVAEAAPAAEEAPAAEAEAAATDTSSESDKTEA.

Positions 259 to 276 (EAAPAAEEAPAAEAEAAA) are enriched in low complexity. A disordered region spans residues 259–288 (EAAPAAEEAPAAEAEAAATDTSSESDKTEA).

It belongs to the universal ribosomal protein uS2 family.

The polypeptide is Small ribosomal subunit protein uS2 (Maricaulis maris (strain MCS10) (Caulobacter maris)).